Here is a 206-residue protein sequence, read N- to C-terminus: Small ribosomal subunit protein uS4 (206 aa).

Residues 18 to 46 are disordered; the sequence is NIWGRPKSPVNRREYGPGQHGQRRKGKIS. Residues 94–154 form the S4 RNA-binding domain; sequence RRLDAVVYRA…DRSKQMVALI (61 aa).

The protein belongs to the universal ribosomal protein uS4 family. In terms of assembly, part of the 30S ribosomal subunit. Contacts protein S5. The interaction surface between S4 and S5 is involved in control of translational fidelity.

Its function is as follows. One of the primary rRNA binding proteins, it binds directly to 16S rRNA where it nucleates assembly of the body of the 30S subunit. In terms of biological role, with S5 and S12 plays an important role in translational accuracy. This chain is Small ribosomal subunit protein uS4, found in Roseobacter denitrificans (strain ATCC 33942 / OCh 114) (Erythrobacter sp. (strain OCh 114)).